Consider the following 337-residue polypeptide: Tetraacyldisaccharide 4'-kinase (337 aa).

An ATP-binding site is contributed by 56–63 (VAGGAGKT).

Belongs to the LpxK family.

The enzyme catalyses a lipid A disaccharide + ATP = a lipid IVA + ADP + H(+). The protein operates within glycolipid biosynthesis; lipid IV(A) biosynthesis; lipid IV(A) from (3R)-3-hydroxytetradecanoyl-[acyl-carrier-protein] and UDP-N-acetyl-alpha-D-glucosamine: step 6/6. Transfers the gamma-phosphate of ATP to the 4'-position of a tetraacyldisaccharide 1-phosphate intermediate (termed DS-1-P) to form tetraacyldisaccharide 1,4'-bis-phosphate (lipid IVA). The sequence is that of Tetraacyldisaccharide 4'-kinase from Rhodospirillum centenum (strain ATCC 51521 / SW).